An 89-amino-acid polypeptide reads, in one-letter code: Large ribosomal subunit protein bL27 (89 aa).

Residues 1–20 (MAHKKAGGSSRNGRDSAGRR) form a disordered region.

The protein belongs to the bacterial ribosomal protein bL27 family.

This chain is Large ribosomal subunit protein bL27, found in Zymomonas mobilis subsp. mobilis (strain ATCC 31821 / ZM4 / CP4).